The sequence spans 333 residues: Complement C1q and tumor necrosis factor-related protein 9A (333 aa).

Positions 1–19 (MRIWWLLLAIEICTGNINS) are cleaved as a signal peptide. Collagen-like domains follow at residues 24-82 (RQGH…DGKV), 95-154 (GSPG…PGPM), and 155-191 (GPIG…GEKG). The disordered stretch occupies residues 24–188 (RQGHPGIPGN…GIRGWKGDRG (165 aa)). Positions 26–40 (GHPGIPGNPGHNGLP) are enriched in low complexity. 4-hydroxyproline is present on residues proline 31, proline 34, and proline 40. Residues 42-57 (RDGRDGAKGDKGDAGE) show a composition bias toward basic and acidic residues. 4-hydroxyproline is present on residues proline 58, proline 61, and proline 64. Residues 69–88 (TSGEKGERGADGKVEAKGIK) show a composition bias toward basic and acidic residues. A 5-hydroxylysine mark is found at lysine 73 and lysine 127. O-linked (Gal...) hydroxylysine glycans are attached at residues lysine 73 and lysine 127. 4-hydroxyproline is present on residues proline 151, proline 160, and proline 175. Residues 197-333 (LVLPKSAFTV…FTGFLLFSSP (137 aa)) enclose the C1q domain.

As to quaternary structure, multimers (predominantly trimers). Interacts with ADIPOQ via the C1q domain to form a heterotrimeric complex. Interacts with CTRP9B. Forms heterotrimers and heterooligomeric complexes with CTRP9B. As to expression, expressed predominantly in adipose tissue.

It is found in the secreted. Functionally, probable adipokine. Activates AMPK, AKT, and p44/42 MAPK signaling pathways. The sequence is that of Complement C1q and tumor necrosis factor-related protein 9A (C1QTNF9) from Homo sapiens (Human).